A 226-amino-acid chain; its full sequence is MTQRTSVALLSGGLDSATAAAMALEEGDRVIGLSFDYGQRHHRELEAAAAVASHLGLAEHHCLAVDLAAWGGSALTDDAVTIPTDGVQEGVIPPTYVPGRNTVFIAVGLSLAEARGAERLVLGVNAVDYSGYPDCRPDYLNVFQQLANLASKAGREGHGTELWAPLVEWSKTRIVEEAFRLNVPIQSTWSCYSGGTTPCGICDSCRIRDAALREAGRPDLCSNASA.

10–20 is a binding site for ATP; sequence LSGGLDSATAA. Residues C191, C199, C202, and C205 each contribute to the Zn(2+) site.

It belongs to the QueC family. It depends on Zn(2+) as a cofactor.

It carries out the reaction 7-carboxy-7-deazaguanine + NH4(+) + ATP = 7-cyano-7-deazaguanine + ADP + phosphate + H2O + H(+). Its pathway is purine metabolism; 7-cyano-7-deazaguanine biosynthesis. Its function is as follows. Catalyzes the ATP-dependent conversion of 7-carboxy-7-deazaguanine (CDG) to 7-cyano-7-deazaguanine (preQ(0)). The chain is 7-cyano-7-deazaguanine synthase from Parasynechococcus marenigrum (strain WH8102).